The sequence spans 284 residues: 2-dehydro-3-deoxyphosphooctonate aldolase (284 aa).

The protein belongs to the KdsA family.

The protein resides in the cytoplasm. The catalysed reaction is D-arabinose 5-phosphate + phosphoenolpyruvate + H2O = 3-deoxy-alpha-D-manno-2-octulosonate-8-phosphate + phosphate. The protein operates within carbohydrate biosynthesis; 3-deoxy-D-manno-octulosonate biosynthesis; 3-deoxy-D-manno-octulosonate from D-ribulose 5-phosphate: step 2/3. It functions in the pathway bacterial outer membrane biogenesis; lipopolysaccharide biosynthesis. The sequence is that of 2-dehydro-3-deoxyphosphooctonate aldolase from Histophilus somni (strain 129Pt) (Haemophilus somnus).